The following is a 159-amino-acid chain: SsrA-binding protein (159 aa).

This sequence belongs to the SmpB family.

It localises to the cytoplasm. In terms of biological role, required for rescue of stalled ribosomes mediated by trans-translation. Binds to transfer-messenger RNA (tmRNA), required for stable association of tmRNA with ribosomes. tmRNA and SmpB together mimic tRNA shape, replacing the anticodon stem-loop with SmpB. tmRNA is encoded by the ssrA gene; the 2 termini fold to resemble tRNA(Ala) and it encodes a 'tag peptide', a short internal open reading frame. During trans-translation Ala-aminoacylated tmRNA acts like a tRNA, entering the A-site of stalled ribosomes, displacing the stalled mRNA. The ribosome then switches to translate the ORF on the tmRNA; the nascent peptide is terminated with the 'tag peptide' encoded by the tmRNA and targeted for degradation. The ribosome is freed to recommence translation, which seems to be the essential function of trans-translation. The chain is SsrA-binding protein from Dichelobacter nodosus (strain VCS1703A).